Reading from the N-terminus, the 620-residue chain is MSQNTKGAGLLISAIGVVYGDIGTSPLYALKETFAGHHPIAVTPDNVFGVLSLVFWTVMLLVTVKYVIVIMRADNHGEGGSLALLALVTELTRGYRVYYPLMLLGVIAAALFYGDSMITPAISVLSAVEGLEVVTPRLTPYVVPITAVVLTGLFMIQKRGTGLVGKLFGPVMCLWFLVLALLGIVNIVAAPHVLGAINPIYAADFIVKHPMMSFFALGSIVLAVTGGEALYTDMGHFGRFPIRVAWFALVLPALLLNYFGQGALLLSDPSAIQNPFFRQVPEWMVVPMVGLATCATVIASQAVISGAYSVARQAIQLGLLPRMTIVHTSGEEEGQIYIPFTNWTLYIAVMALVIGFQSSSNLAAAYGIAVTGTMMIDTILVAFVMALMWRWHWIAVAAVAGTLLLVDLAFFFANIIKVAQGGWFPLFIGVLSFTVLTTWRRGRELVRNQVKKLAVPLDVVMRALGPNVSRARGTAVFLTAATDGVPPALLHNLKHNQTVHQRVVLATVMTADTPYVPDSERVTMTDLGDGFHRLIIRYGFMQTPDVPAALELCKAFGQEFNMMATSFFLSRETYVPSLNPGMAHWRERLFTFMTLNATRATIFFKIPTDRVVELGTQLEI.

A run of 12 helical transmembrane segments spans residues 10 to 30 (LLIS…LYAL), 50 to 70 (VLSL…VIVI), 102 to 122 (MLLG…TPAI), 138 to 158 (LTPY…MIQK), 168 to 188 (FGPV…VNIV), 211 to 231 (MMSF…EALY), 246 to 266 (WFAL…ALLL), 284 to 304 (MVVP…QAVI), 336 to 356 (IYIP…VIGF), 368 to 388 (IAVT…MALM), 393 to 413 (WIAV…FFFA), and 415 to 435 (IIKV…SFTV).

It belongs to the HAK/KUP transporter (TC 2.A.72) family.

The protein localises to the cell inner membrane. It catalyses the reaction K(+)(in) + H(+)(in) = K(+)(out) + H(+)(out). Functionally, transport of potassium into the cell. Likely operates as a K(+):H(+) symporter. In Rhodopseudomonas palustris (strain BisB18), this protein is Probable potassium transport system protein Kup 1.